Consider the following 214-residue polypeptide: Orotate phosphoribosyltransferase (214 aa).

Residue Lys-26 participates in 5-phospho-alpha-D-ribose 1-diphosphate binding. An orotate-binding site is contributed by 34–35; it reads FF. 5-phospho-alpha-D-ribose 1-diphosphate contacts are provided by residues 72–73, Arg-99, Lys-100, Lys-103, His-105, and 124–132; these read YK and DDVITAGTA. Orotate is bound by residues Thr-128 and Arg-156.

The protein belongs to the purine/pyrimidine phosphoribosyltransferase family. PyrE subfamily. In terms of assembly, homodimer. Requires Mg(2+) as cofactor.

It carries out the reaction orotidine 5'-phosphate + diphosphate = orotate + 5-phospho-alpha-D-ribose 1-diphosphate. It functions in the pathway pyrimidine metabolism; UMP biosynthesis via de novo pathway; UMP from orotate: step 1/2. Functionally, catalyzes the transfer of a ribosyl phosphate group from 5-phosphoribose 1-diphosphate to orotate, leading to the formation of orotidine monophosphate (OMP). The chain is Orotate phosphoribosyltransferase from Actinobacillus succinogenes (strain ATCC 55618 / DSM 22257 / CCUG 43843 / 130Z).